A 761-amino-acid polypeptide reads, in one-letter code: Translation initiation factor IF-2 (761 aa).

The segment at 39–179 is disordered; it reads DEETLNKAKQ…KVNHQQMPLP (141 aa). A compositionally biased stretch (low complexity) spans 45–105; it reads KAKQAGKPAA…NNQQSQSQGQ (61 aa). Residues 106–120 show a composition bias toward polar residues; it reads TKRPSQASNNQSGAA. A compositionally biased stretch (low complexity) spans 142–154; the sequence is PGSNNRRPGNNQN. Over residues 155–168 the composition is skewed to basic residues; the sequence is RRNHGNRGGKRRPQ. Positions 262-435 constitute a tr-type G domain; that stretch reads ERPPVVTIMG…EVEEFKANPD (174 aa). The tract at residues 271-278 is G1; it reads GHVDHGKT. GTP is bound at residue 271-278; it reads GHVDHGKT. Residues 296 to 300 are G2; that stretch reads GITQH. The G3 stretch occupies residues 317 to 320; the sequence is DTPG. Residues 317-321 and 371-374 each bind GTP; these read DTPGH and NKID. The segment at 371–374 is G4; that stretch reads NKID. The interval 407-409 is G5; it reads SAL.

Belongs to the TRAFAC class translation factor GTPase superfamily. Classic translation factor GTPase family. IF-2 subfamily.

The protein resides in the cytoplasm. Functionally, one of the essential components for the initiation of protein synthesis. Protects formylmethionyl-tRNA from spontaneous hydrolysis and promotes its binding to the 30S ribosomal subunits. Also involved in the hydrolysis of GTP during the formation of the 70S ribosomal complex. The chain is Translation initiation factor IF-2 from Shouchella clausii (strain KSM-K16) (Alkalihalobacillus clausii).